A 47-amino-acid chain; its full sequence is Large ribosomal subunit protein bL34 (47 aa).

Belongs to the bacterial ribosomal protein bL34 family.

This chain is Large ribosomal subunit protein bL34, found in Corynebacterium glutamicum (strain R).